The sequence spans 100 residues: Small ribosomal subunit protein uS14c (100 aa).

It belongs to the universal ribosomal protein uS14 family. In terms of assembly, part of the 30S ribosomal subunit.

The protein resides in the plastid. In terms of biological role, binds 16S rRNA, required for the assembly of 30S particles. This Epifagus virginiana (Beechdrops) protein is Small ribosomal subunit protein uS14c.